An 874-amino-acid polypeptide reads, in one-letter code: Alanine--tRNA ligase (874 aa).

Positions 562, 566, 665, and 669 each coordinate Zn(2+).

Belongs to the class-II aminoacyl-tRNA synthetase family. Zn(2+) serves as cofactor.

The protein localises to the cytoplasm. The catalysed reaction is tRNA(Ala) + L-alanine + ATP = L-alanyl-tRNA(Ala) + AMP + diphosphate. Its function is as follows. Catalyzes the attachment of alanine to tRNA(Ala) in a two-step reaction: alanine is first activated by ATP to form Ala-AMP and then transferred to the acceptor end of tRNA(Ala). Also edits incorrectly charged Ser-tRNA(Ala) and Gly-tRNA(Ala) via its editing domain. The polypeptide is Alanine--tRNA ligase (Pseudomonas paraeruginosa (strain DSM 24068 / PA7) (Pseudomonas aeruginosa (strain PA7))).